A 402-amino-acid polypeptide reads, in one-letter code: Speedy protein E21 (402 aa).

The segment at 1–90 is disordered; it reads MDRTETRFRK…EPEKELAPEP (90 aa). Positions 16–39 are enriched in polar residues; the sequence is GKITTSRQLHPQNEQSPQRSTSGY. Residues 76–90 show a composition bias toward acidic residues; it reads DESEEEPEKELAPEP.

It belongs to the Speedy/Ringo family.

In Homo sapiens (Human), this protein is Speedy protein E21.